The chain runs to 273 residues: uncharacterized protein (273 aa).

This is an uncharacterized protein from Methanocaldococcus jannaschii (strain ATCC 43067 / DSM 2661 / JAL-1 / JCM 10045 / NBRC 100440) (Methanococcus jannaschii).